Consider the following 160-residue polypeptide: Small ribosomal subunit protein uS9 (160 aa).

The segment covering 1–18 (MTDTSNSLQDLGTLTGAP) has biased composition (polar residues). The tract at residues 1–37 (MTDTSNSLQDLGTLTGAPSAQPVKSVEPKIDAQGRAY) is disordered.

The protein belongs to the universal ribosomal protein uS9 family.

The chain is Small ribosomal subunit protein uS9 from Hyphomonas neptunium (strain ATCC 15444).